Here is a 598-residue protein sequence, read N- to C-terminus: NADH-ubiquinone oxidoreductase chain 5 (598 aa).

16 consecutive transmembrane segments (helical) span residues 1 to 21, 28 to 48, 81 to 101, 115 to 135, 171 to 191, 193 to 213, 233 to 253, 265 to 285, 293 to 312, 323 to 343, 362 to 382, 399 to 421, 454 to 474, 480 to 500, 509 to 529, and 576 to 596; these read MLELWGVLSLTSLGVMVIFLF, FAESVKYAGYMNAVLLSILLM, CFFVVGLYVTWNILMFSFYYM, GLFLIAMLLLVSAESLFQLLI, GDIGLLIMLMWSLVTLGDWSF, GLYALDFVNTFFLLGVVLAAA, TPVSSLLHSSTMVVAGVFLLI, IQLMVFFLGTMTTLFSAICAL, VVAFSTASQLGLMVTAVGAG, MHAFFKAMLFMCSGSFIHGLQ, SVCFFIGSAALMGVPFLAGFF, WAVGLVLIATSFTAAYSVRLLYF, VIAGVVFIYFLSPNQISCLSL, LAAVFVTLVGGLIAWDVVNLL, IPELAFEAQVGFYPLIMHKLI, and LIKMYIAVMVMMGGLILGIMI.

This sequence belongs to the complex I subunit 5 family.

It localises to the mitochondrion inner membrane. It carries out the reaction a ubiquinone + NADH + 5 H(+)(in) = a ubiquinol + NAD(+) + 4 H(+)(out). Core subunit of the mitochondrial membrane respiratory chain NADH dehydrogenase (Complex I) that is believed to belong to the minimal assembly required for catalysis. Complex I functions in the transfer of electrons from NADH to the respiratory chain. The immediate electron acceptor for the enzyme is believed to be ubiquinone. This is NADH-ubiquinone oxidoreductase chain 5 (ND5) from Branchiostoma lanceolatum (Common lancelet).